Here is a 71-residue protein sequence, read N- to C-terminus: Small ribosomal subunit protein bS21 (71 aa).

The interval 39–71 (EKPTQERKRKAAAAVKRQMRRTSRDVTKRKRLY) is disordered. A compositionally biased stretch (basic residues) spans 45 to 71 (RKRKAAAAVKRQMRRTSRDVTKRKRLY).

This sequence belongs to the bacterial ribosomal protein bS21 family.

This chain is Small ribosomal subunit protein bS21, found in Xylella fastidiosa (strain M12).